Consider the following 43-residue polypeptide: uncharacterized protein (43 aa).

This is an uncharacterized protein from Dictyostelium discoideum (Social amoeba).